A 322-amino-acid polypeptide reads, in one-letter code: Methionyl-tRNA formyltransferase (322 aa).

(6S)-5,6,7,8-tetrahydrofolate is bound at residue serine 112–proline 115.

This sequence belongs to the Fmt family.

The catalysed reaction is L-methionyl-tRNA(fMet) + (6R)-10-formyltetrahydrofolate = N-formyl-L-methionyl-tRNA(fMet) + (6S)-5,6,7,8-tetrahydrofolate + H(+). Attaches a formyl group to the free amino group of methionyl-tRNA(fMet). The formyl group appears to play a dual role in the initiator identity of N-formylmethionyl-tRNA by promoting its recognition by IF2 and preventing the misappropriation of this tRNA by the elongation apparatus. The protein is Methionyl-tRNA formyltransferase of Synechococcus sp. (strain JA-3-3Ab) (Cyanobacteria bacterium Yellowstone A-Prime).